Consider the following 703-residue polypeptide: Ion-translocating oxidoreductase complex subunit C (703 aa).

4Fe-4S ferredoxin-type domains follow at residues 369-398 (YDPQ…QQMY) and 408-437 (KSNQ…IQYF). Cys378, Cys381, Cys384, Cys388, Cys417, Cys420, Cys423, and Cys427 together coordinate [4Fe-4S] cluster. Disordered stretches follow at residues 467 to 542 (RLER…PDNS) and 555 to 680 (RQQT…PKKA). The segment covering 485–497 (ARREELAANKGED) has biased composition (basic and acidic residues). The span at 559–577 (NGNSPVSSASNSDSATISA) shows a compositional bias: low complexity. A compositionally biased stretch (polar residues) spans 578 to 592 (DNTHSTPKTAQNQTA). Low complexity-rich tracts occupy residues 598–629 (AAVA…TEKT) and 641–669 (AAVA…EKTA).

It belongs to the 4Fe4S bacterial-type ferredoxin family. RnfC subfamily. In terms of assembly, the complex is composed of six subunits: RnfA, RnfB, RnfC, RnfD, RnfE and RnfG. It depends on [4Fe-4S] cluster as a cofactor.

The protein resides in the cell inner membrane. In terms of biological role, part of a membrane-bound complex that couples electron transfer with translocation of ions across the membrane. In Actinobacillus succinogenes (strain ATCC 55618 / DSM 22257 / CCUG 43843 / 130Z), this protein is Ion-translocating oxidoreductase complex subunit C.